Reading from the N-terminus, the 182-residue chain is Ribosome maturation factor RimM (182 aa).

The 81-residue stretch at 102–182 folds into the PRC barrel domain; that stretch reads EEGDYYWKDL…SIEVDWDPGF (81 aa).

Belongs to the RimM family. Binds ribosomal protein uS19.

It is found in the cytoplasm. Its function is as follows. An accessory protein needed during the final step in the assembly of 30S ribosomal subunit, possibly for assembly of the head region. Essential for efficient processing of 16S rRNA. May be needed both before and after RbfA during the maturation of 16S rRNA. It has affinity for free ribosomal 30S subunits but not for 70S ribosomes. This chain is Ribosome maturation factor RimM, found in Escherichia fergusonii (strain ATCC 35469 / DSM 13698 / CCUG 18766 / IAM 14443 / JCM 21226 / LMG 7866 / NBRC 102419 / NCTC 12128 / CDC 0568-73).